Consider the following 319-residue polypeptide: Acetyl-coenzyme A carboxylase carboxyl transferase subunit alpha (319 aa).

In terms of domain architecture, CoA carboxyltransferase C-terminal spans 39 to 293; it reads RLQKKSNDLT…KAVLEKQLHE (255 aa).

This sequence belongs to the AccA family. Acetyl-CoA carboxylase is a heterohexamer composed of biotin carboxyl carrier protein (AccB), biotin carboxylase (AccC) and two subunits each of ACCase subunit alpha (AccA) and ACCase subunit beta (AccD).

The protein resides in the cytoplasm. The enzyme catalyses N(6)-carboxybiotinyl-L-lysyl-[protein] + acetyl-CoA = N(6)-biotinyl-L-lysyl-[protein] + malonyl-CoA. It participates in lipid metabolism; malonyl-CoA biosynthesis; malonyl-CoA from acetyl-CoA: step 1/1. In terms of biological role, component of the acetyl coenzyme A carboxylase (ACC) complex. First, biotin carboxylase catalyzes the carboxylation of biotin on its carrier protein (BCCP) and then the CO(2) group is transferred by the carboxyltransferase to acetyl-CoA to form malonyl-CoA. The protein is Acetyl-coenzyme A carboxylase carboxyl transferase subunit alpha of Neisseria meningitidis serogroup B (strain ATCC BAA-335 / MC58).